The following is a 538-amino-acid chain: Syncytin-2 (538 aa).

An N-terminal signal peptide occupies residues 1–15; that stretch reads MGLLLLVLILTPSLA. Over 16 to 478 the chain is Extracellular; it reads AYRHPDFPLL…GWLNWEGTWK (463 aa). Positions 43-46 match the CXXC motif; sequence CWLC. Disulfide bonds link Cys-43-Cys-46, Cys-43-Cys-439, and Cys-431-Cys-438. 8 N-linked (GlcNAc...) asparagine glycosylation sites follow: Asn-133, Asn-146, Asn-177, Asn-220, Asn-241, Asn-247, Asn-312, and Asn-332. The tract at residues 354–374 is fusion peptide; it reads FIPLLAGLGILAGTGTGIAGI. The CKS-17 signature appears at 414 to 430; it reads LQNRRGLDMLTAAQGGI. The CX6CC signature appears at 431–439; the sequence is CLALDEKCC. Residue Asn-443 is glycosylated (N-linked (GlcNAc...) asparagine). The helical transmembrane segment at 479–499 threads the bilayer; it reads WFSWVLPLTGPLVSLLLLLLF. Over 500–538 the chain is Cytoplasmic; that stretch reads GPCLLNLITQFVSSRLQAIKLQTNLSAGRRPRNIQESPF.

This sequence belongs to the gamma type-C retroviral envelope protein family. HERV class-I FRD env subfamily. As to quaternary structure, the surface and transmembrane proteins form a heterodimer. They are attached by non-covalent interactions or by a labile interchain disulfide bond. Specific enzymatic cleavages in vivo yield the mature SU and TM proteins. Post-translationally, the CXXC motif is highly conserved across a broad range of retroviral envelope proteins. It is thought to participate in the formation of a labile disulfide bond possibly with the CX6CC motif present in the transmembrane protein.

The protein localises to the virion. Its subcellular location is the cell membrane. Its function is as follows. This endogenous retroviral envelope protein has retained its original fusogenic properties and participates in trophoblast fusion and the formation of a syncytium during placenta morphogenesis. The interaction with MFSD2A is apparently important for this process. In terms of biological role, endogenous envelope proteins may have kept, lost or modified their original function during evolution but this one can still make pseudotypes with MLV, HIV-1 or SIV-1 virions and confer infectivity. Retroviral envelope proteins mediate receptor recognition and membrane fusion during early infection. The surface protein mediates receptor recognition, while the transmembrane protein anchors the envelope heterodimer to the viral membrane through one transmembrane domain. The other hydrophobic domain, called fusion peptide, mediates fusion of the viral membrane with the target cell membrane. The polypeptide is Syncytin-2 (ERVFRD-1) (Gorilla gorilla gorilla (Western lowland gorilla)).